Consider the following 349-residue polypeptide: Selenide, water dikinase (349 aa).

Residue Cys-17 is part of the active site. Residues Lys-20 and 48-50 (YFD) contribute to the ATP site. Residue Asp-51 participates in Mg(2+) binding. ATP-binding positions include Asp-68, Asp-91, and 139 to 141 (GHS). A Mg(2+)-binding site is contributed by Asp-91. Asp-229 contributes to the Mg(2+) binding site.

Belongs to the selenophosphate synthase 1 family. Class I subfamily. As to quaternary structure, homodimer. Mg(2+) is required as a cofactor.

It carries out the reaction hydrogenselenide + ATP + H2O = selenophosphate + AMP + phosphate + 2 H(+). Functionally, synthesizes selenophosphate from selenide and ATP. The protein is Selenide, water dikinase of Nitrosomonas eutropha (strain DSM 101675 / C91 / Nm57).